The chain runs to 254 residues: Adenosylcobinamide-GDP ribazoletransferase (254 aa).

Transmembrane regions (helical) follow at residues 27–47 (SSLY…VLLA), 50–70 (GMGV…GLIL), 104–124 (VGSF…ICLL), 131–151 (AYGM…LLAA), 170–190 (AGWP…FVLL), 194–214 (LAPS…VGWL), and 233–253 (LVEA…FWAI).

The protein belongs to the CobS family. The cofactor is Mg(2+).

The protein localises to the cell inner membrane. The catalysed reaction is alpha-ribazole + adenosylcob(III)inamide-GDP = adenosylcob(III)alamin + GMP + H(+). The enzyme catalyses alpha-ribazole 5'-phosphate + adenosylcob(III)inamide-GDP = adenosylcob(III)alamin 5'-phosphate + GMP + H(+). The protein operates within cofactor biosynthesis; adenosylcobalamin biosynthesis; adenosylcobalamin from cob(II)yrinate a,c-diamide: step 7/7. Functionally, joins adenosylcobinamide-GDP and alpha-ribazole to generate adenosylcobalamin (Ado-cobalamin). Also synthesizes adenosylcobalamin 5'-phosphate from adenosylcobinamide-GDP and alpha-ribazole 5'-phosphate. This is Adenosylcobinamide-GDP ribazoletransferase from Chlorobaculum tepidum (strain ATCC 49652 / DSM 12025 / NBRC 103806 / TLS) (Chlorobium tepidum).